Consider the following 153-residue polypeptide: Pheromone-binding protein Gp-9 (153 aa).

The N-terminal stretch at 1–19 is a signal peptide; that stretch reads MKTFVLHIFIFALVAFASA. 3 disulfide bridges follow: C37–C77, C73–C129, and C118–C138.

This sequence belongs to the PBP/GOBP family. In terms of assembly, homodimer.

It is found in the secreted. In terms of biological role, colony queen number, a major feature of social organization, is associated with worker genotype for Gp-9. Colonies are headed by either a single reproductive queen (monogyne form) or multiple queens (polygyne form). Differences in worker Gp-9 genotypes between social forms may cause differences in workers' abilities to recognize queens and regulate their numbers. The polypeptide is Pheromone-binding protein Gp-9 (Solenopsis electra (Fire ant)).